The chain runs to 125 residues: Large ribosomal subunit protein bL12 (125 aa).

The protein belongs to the bacterial ribosomal protein bL12 family. Homodimer. Part of the ribosomal stalk of the 50S ribosomal subunit. Forms a multimeric L10(L12)X complex, where L10 forms an elongated spine to which 2 to 4 L12 dimers bind in a sequential fashion. Binds GTP-bound translation factors.

In terms of biological role, forms part of the ribosomal stalk which helps the ribosome interact with GTP-bound translation factors. Is thus essential for accurate translation. The polypeptide is Large ribosomal subunit protein bL12 (Ruthia magnifica subsp. Calyptogena magnifica).